The primary structure comprises 234 residues: Small ribosomal subunit protein uS2c (234 aa).

Belongs to the universal ribosomal protein uS2 family.

Its subcellular location is the plastid. The protein resides in the chloroplast. The protein is Small ribosomal subunit protein uS2c (rps2) of Pinus thunbergii (Japanese black pine).